Reading from the N-terminus, the 175-residue chain is Gamma-crystallin B (175 aa).

2 Beta/gamma crystallin 'Greek key' domains span residues 2 to 40 and 41 to 83; these read GKITFYEDRAFQGRSYECTTDCPNLQPYFSRCNSIRVES and GCWM…CLIP. The connecting peptide stretch occupies residues 84 to 88; sequence PHSGA. 2 consecutive Beta/gamma crystallin 'Greek key' domains span residues 89–129 and 130–172; these read YRMK…NVLE and GSWI…RRVM.

The protein belongs to the beta/gamma-crystallin family. As to quaternary structure, monomer.

Crystallins are the dominant structural components of the vertebrate eye lens. The polypeptide is Gamma-crystallin B (CRYGB) (Homo sapiens (Human)).